The following is a 131-amino-acid chain: uncharacterized protein (131 aa).

The Response regulatory domain occupies 8 to 124 (DILVVDDDPD…ELIRLVQQYC (117 aa)). Aspartate 57 bears the 4-aspartylphosphate mark.

This is an uncharacterized protein from Leptolyngbya boryana (Plectonema boryanum).